Here is a 520-residue protein sequence, read N- to C-terminus: Pantetheine hydrolase VNN2 (520 aa).

Positions 1 to 22 (MVTSSFPISVAVFALITLQVGT) are cleaved as a signal peptide. The CN hydrolase domain occupies 31-306 (YEHAVILPNK…GKLLLSEVDS (276 aa)). The N-linked (GlcNAc...) asparagine glycan is linked to asparagine 39. The active-site Proton acceptor is glutamate 80. The Proton donor role is filled by lysine 179. Cysteine 211 serves as the catalytic Nucleophile. Asparagine 273, asparagine 347, asparagine 357, asparagine 411, and asparagine 468 each carry an N-linked (GlcNAc...) asparagine glycan. A lipid anchor (GPI-anchor amidated cysteine) is attached at cysteine 493. The propeptide at 494–520 (GTSNSAITYLLIFILLMIIALQNIVML) is removed in mature form.

This sequence belongs to the carbon-nitrogen hydrolase superfamily. BTD/VNN family. As to expression, widely expressed with higher expression in spleen and blood.

The protein resides in the cell membrane. The catalysed reaction is (R)-pantetheine + H2O = cysteamine + (R)-pantothenate. Its function is as follows. Amidohydrolase that hydrolyzes specifically one of the carboamide linkages in D-pantetheine thus recycling pantothenic acid (vitamin B5) and releasing cysteamine. Involved in the thymus homing of bone marrow cells. May regulate beta-2 integrin-mediated cell adhesion, migration and motility of neutrophil. In Homo sapiens (Human), this protein is Pantetheine hydrolase VNN2.